Here is a 232-residue protein sequence, read N- to C-terminus: Ribose-5-phosphate isomerase A (232 aa).

Substrate-binding positions include 31–34 (TGST), 88–91 (DGAD), and 101–104 (KGGG). Glutamate 110 functions as the Proton acceptor in the catalytic mechanism. Lysine 128 contacts substrate.

Belongs to the ribose 5-phosphate isomerase family. In terms of assembly, homodimer.

The catalysed reaction is aldehydo-D-ribose 5-phosphate = D-ribulose 5-phosphate. It participates in carbohydrate degradation; pentose phosphate pathway; D-ribose 5-phosphate from D-ribulose 5-phosphate (non-oxidative stage): step 1/1. In terms of biological role, catalyzes the reversible conversion of ribose-5-phosphate to ribulose 5-phosphate. This chain is Ribose-5-phosphate isomerase A, found in Lactobacillus johnsonii (strain CNCM I-12250 / La1 / NCC 533).